Reading from the N-terminus, the 231-residue chain is 6-hydroxymethyl-7,8-dihydropterin pyrophosphokinase (231 aa).

This sequence belongs to the archaeal 6-HMPDK family. It depends on Mg(2+) as a cofactor.

The catalysed reaction is 6-hydroxymethyl-7,8-dihydropterin + ATP = (7,8-dihydropterin-6-yl)methyl diphosphate + AMP + H(+). Catalyzes the transfer of diphosphate from ATP to 6-hydroxymethyl-7,8-dihydropterin (6-HMD), leading to 6-hydroxymethyl-7,8-dihydropterin diphosphate (6-HMDP). To a lesser extent, can also use CTP, UTP, and GTP as the nucleotide triphosphate substrate. The chain is 6-hydroxymethyl-7,8-dihydropterin pyrophosphokinase from Pyrococcus furiosus (strain ATCC 43587 / DSM 3638 / JCM 8422 / Vc1).